Here is a 284-residue protein sequence, read N- to C-terminus: 4-hydroxybenzoate octaprenyltransferase (284 aa).

8 consecutive transmembrane segments (helical) span residues 14–34 (VHQPVGFFLLLWPTLWALWIT), 41–61 (FIVLSLFIVGVMCMRSAGCVI), 93–113 (WVFFILILIALIVVCVFNNII), 134–154 (YIYLPQLVLGIIFSWSILIVY), 166–186 (WLLFLANTIWVVLYDTEYAMV), 209–229 (IVIGILQLLTVFILYIIGIVE), 233–253 (IIFYLFSIVGASILFIWQQVL), and 262–282 (CLWAFLSNSYVGMLIFVGIVL).

Belongs to the UbiA prenyltransferase family. Mg(2+) serves as cofactor.

The protein localises to the cell inner membrane. The enzyme catalyses all-trans-octaprenyl diphosphate + 4-hydroxybenzoate = 4-hydroxy-3-(all-trans-octaprenyl)benzoate + diphosphate. It participates in cofactor biosynthesis; ubiquinone biosynthesis. Its function is as follows. Catalyzes the prenylation of para-hydroxybenzoate (PHB) with an all-trans polyprenyl group. Mediates the second step in the final reaction sequence of ubiquinone-8 (UQ-8) biosynthesis, which is the condensation of the polyisoprenoid side chain with PHB, generating the first membrane-bound Q intermediate 3-octaprenyl-4-hydroxybenzoate. This chain is 4-hydroxybenzoate octaprenyltransferase, found in Blochmanniella floridana.